The following is a 465-amino-acid chain: Hydroxyacid-oxoacid transhydrogenase, mitochondrial (465 aa).

It belongs to the iron-containing alcohol dehydrogenase family. Hydroxyacid-oxoacid transhydrogenase subfamily.

Its subcellular location is the mitochondrion. The catalysed reaction is (S)-3-hydroxybutanoate + 2-oxoglutarate = (R)-2-hydroxyglutarate + acetoacetate. The enzyme catalyses 4-hydroxybutanoate + 2-oxoglutarate = (R)-2-hydroxyglutarate + succinate semialdehyde. Functionally, catalyzes the cofactor-independent reversible oxidation of gamma-hydroxybutyrate (GHB) to succinic semialdehyde (SSA) coupled to reduction of 2-ketoglutarate (2-KG) to D-2-hydroxyglutarate (D-2-HG). L-3-hydroxybutyrate (L-3-OHB) is also a substrate for HOT when using 2-KG as hydrogen acceptor, resulting in the formation of D-2-HG. In Caenorhabditis briggsae, this protein is Hydroxyacid-oxoacid transhydrogenase, mitochondrial.